The sequence spans 464 residues: E3 ubiquitin-protein ligase parkin (464 aa).

Residues 1–76 (MIVFVRFNSS…VHIVQRPRRR (76 aa)) form the Ubiquitin-like domain. Ser-65 is subject to Phosphoserine; by PINK1. Residues 70-96 (VQRPRRRSHETNASGGDEPQSTSEGSI) are disordered. Residues 77–236 (SHETNASGGD…LITSNRRSIP (160 aa)) are necessary for PINK1-dependent localization to mitochondria. A Phosphothreonine modification is found at Thr-80. The segment covering 80–96 (TNASGGDEPQSTSEGSI) has biased composition (polar residues). Residues 140-224 (PTYNSFFIYC…PTSDKDTSVA (85 aa)) form an RING-type 0; atypical zinc finger. Thr-174 is subject to Phosphothreonine; by PINK1. The interval 203–237 (TRAEFFFKCGAHPTSDKDTSVALNLITSNRRSIPC) is SYT11 binding 1. Thr-216 carries the post-translational modification Phosphothreonine. A TRIAD supradomain region spans residues 233–464 (RSIPCIACTD…ACMGDHWFDV (232 aa)). Zn(2+) is bound by residues Cys-237, Cys-240, Cys-252, His-256, Cys-259, Cys-262, Cys-288, Cys-292, Cys-331, and Cys-336. The RING-type 1 zinc-finger motif lies at 237 to 292 (CIACTDVRSPVLVFQCNHRHVICLDCFHLYCVTRLNDRQFVHDAQLGYSLPCVAGC). The interval 256–292 (HVICLDCFHLYCVTRLNDRQFVHDAQLGYSLPCVAGC) is SYT11 binding 2. Residues 312 to 376 (TRYQQYGAEE…CKEAYHEGDC (65 aa)) form an IBR-type zinc finger. A Glycyl lysine isopeptide (Lys-Gly) (interchain with G-Cter in ISG15) cross-link involves residue Lys-348. Zn(2+) contacts are provided by Cys-351, Cys-359, Cys-364, and Cys-367. Lys-368 participates in a covalent cross-link: Glycyl lysine isopeptide (Lys-Gly) (interchain with G-Cter in ISG15). Positions 372 and 376 each coordinate Zn(2+). Residues 377–409 (DSLLEPSGATSQAYRVDKRAAEQARWEEASKET) form an REP region. Zn(2+) is bound by residues Cys-417 and Cys-420. An RING-type 2; atypical zinc finger spans residues 417-448 (CPRCNVPIEKNGGCMHMKCPQPQCKLEWCWNC). Cys-430 is a catalytic residue. Zn(2+) contacts are provided by Cys-435, Cys-440, Cys-445, Cys-448, Cys-456, and His-460.

Belongs to the RBR family. Parkin subfamily. Forms an E3 ubiquitin ligase complex with UBE2L3 or UBE2L6. Mediates 'Lys-63'-linked polyubiquitination by associating with UBE2V1. Part of a SCF-like complex, consisting of PRKN, CUL1 and FBXW7. Interacts with SNCAIP. Binds to the C2A and C2B domains of SYT11. Interacts and regulates the turnover of SEPTIN5. Part of a complex, including STUB1, HSP70 and GPR37. The amount of STUB1 in the complex increases during ER stress. STUB1 promotes the dissociation of HSP70 from PRKN and GPR37, thus facilitating PRKN-mediated GPR37 ubiquitination. HSP70 transiently associates with unfolded GPR37 and inhibits the E3 activity of PRKN, whereas, STUB1 enhances the E3 activity of PRKN through promotion of dissociation of HSP70 from PRKN-GPR37 complexes. Interacts with PSMD4 and PACRG. Interacts with LRRK2. Interacts with RANBP2. Interacts with SUMO1 but not SUMO2, which promotes nuclear localization and autoubiquitination. Interacts (via first RING-type domain) with AIMP2 (via N-terminus). Interacts with PSMA7 and RNF41. Interacts with PINK1. Forms a complex with PINK1 and PARK7. Interacts with CHPF, the interaction with isoform 2 may facilitate PRKN transport into the mitochondria. Interacts with MFN2 (phosphorylated), promotes PRKN localization in dysfunctional depolarized mitochondria. Interacts with FBXO7; this promotes translocation to dysfunctional depolarized mitochondria. Interacts with ZNF746. Interacts with heat shock protein 70 family members, including HSPA1L, HSPA1A and HSPA8; interaction HSPA1L promotes translocation to damaged mitochondria. Interacts with BAG4 and, to a lesser extent, BAG5; interaction with BAG4 inhibits translocation to damaged mitochondria. Forms a complex with PRKN and PARK7. Interacts with AMBRA1. Auto-ubiquitinates in an E2-dependent manner leading to its own degradation. Also polyubiquitinated by RNF41 for proteasomal degradation. In terms of processing, S-nitrosylated. Post-translationally, phosphorylated. Activation requires phosphorylation at Ser-65 by PINK1 and binding to PINK1 phosphorylated ubiquitin. Phosphorylation at Thr-174 by PINK1 and at Thr-216 is important for mitochondrial localization. Expressed in all subdivisions of the brain (at protein level). Highly expressed in brainstem, cranial nerve, pontine, cerebellar nuclei, indusium griseum, nuclei reticularis, strata oriens and laccunosum moleculare of the hippocampal CA2 region. Low levels were found in the telencephalon and diencephalon. Expressed in heart, liver, skeletal muscle, kidney and testis.

It localises to the cytoplasm. The protein resides in the cytosol. It is found in the nucleus. The protein localises to the endoplasmic reticulum. Its subcellular location is the mitochondrion. It localises to the mitochondrion outer membrane. The protein resides in the cell projection. It is found in the neuron projection. The protein localises to the postsynaptic density. Its subcellular location is the presynapse. The enzyme catalyses [E2 ubiquitin-conjugating enzyme]-S-ubiquitinyl-L-cysteine + [acceptor protein]-L-lysine = [E2 ubiquitin-conjugating enzyme]-L-cysteine + [acceptor protein]-N(6)-ubiquitinyl-L-lysine.. It participates in protein modification; protein ubiquitination. With respect to regulation, in the autoinhibited state the side chain of Phe-462 inserts into a hydrophobic groove in RING-0, occluding the ubiquitin acceptor site Cys-430, whereas the REP repressor element binds RING-1 and blocks its E2-binding site. Activation of PRKN requires 2 steps: (1) phosphorylation at Ser-65 by PINK1 and (2) binding to phosphorylated ubiquitin, leading to unlock repression of the catalytic Cys-430 by the RING-0 region via an allosteric mechanism and converting PRKN to its fully-active form. According to another report, phosphorylation at Ser-65 by PINK1 is not essential for activation and only binding to phosphorylated ubiquitin is essential to unlock repression. In addition, ISG15 conjugation positively regulates its ubiquitin E3 ligase activity by suppressing the intramolecular interaction that maintains its autoinhibited conformation. Functionally, functions within a multiprotein E3 ubiquitin ligase complex, catalyzing the covalent attachment of ubiquitin moieties onto substrate proteins. Substrates include SYT11 and VDAC1. Other substrates are BCL2, CCNE1, GPR37, RHOT1/MIRO1, MFN1, MFN2, STUB1, SNCAIP, SEPTIN5, TOMM20, USP30, ZNF746, MIRO1 and AIMP2. Mediates monoubiquitination as well as 'Lys-6', 'Lys-11', 'Lys-48'-linked and 'Lys-63'-linked polyubiquitination of substrates depending on the context. Participates in the removal and/or detoxification of abnormally folded or damaged protein by mediating 'Lys-63'-linked polyubiquitination of misfolded proteins such as PARK7: 'Lys-63'-linked polyubiquitinated misfolded proteins are then recognized by HDAC6, leading to their recruitment to aggresomes, followed by degradation. Mediates 'Lys-63'-linked polyubiquitination of a 22 kDa O-linked glycosylated isoform of SNCAIP, possibly playing a role in Lewy-body formation. Mediates monoubiquitination of BCL2, thereby acting as a positive regulator of autophagy. Protects against mitochondrial dysfunction during cellular stress, by acting downstream of PINK1 to coordinate mitochondrial quality control mechanisms that remove and replace dysfunctional mitochondrial components. Depending on the severity of mitochondrial damage and/or dysfunction, activity ranges from preventing apoptosis and stimulating mitochondrial biogenesis to regulating mitochondrial dynamics and eliminating severely damaged mitochondria via mitophagy. Activation and recruitment onto the outer membrane of damaged/dysfunctional mitochondria (OMM) requires PINK1-mediated phosphorylation of both PRKN and ubiquitin. After mitochondrial damage, functions with PINK1 to mediate the decision between mitophagy or preventing apoptosis by inducing either the poly- or monoubiquitination of VDAC1, respectively; polyubiquitination of VDAC1 promotes mitophagy, while monoubiquitination of VDAC1 decreases mitochondrial calcium influx which ultimately inhibits apoptosis. When cellular stress results in irreversible mitochondrial damage, promotes the autophagic degradation of dysfunctional depolarized mitochondria (mitophagy) by promoting the ubiquitination of mitochondrial proteins such as TOMM20, RHOT1/MIRO1, MFN1 and USP30. Preferentially assembles 'Lys-6'-, 'Lys-11'- and 'Lys-63'-linked polyubiquitin chains, leading to mitophagy. The PINK1-PRKN pathway also promotes fission of damaged mitochondria by PINK1-mediated phosphorylation which promotes the PRKN-dependent degradation of mitochondrial proteins involved in fission such as MFN2. This prevents the refusion of unhealthy mitochondria with the mitochondrial network or initiates mitochondrial fragmentation facilitating their later engulfment by autophagosomes. Regulates motility of damaged mitochondria via the ubiquitination and subsequent degradation of MIRO1 and MIRO2; in motor neurons, this likely inhibits mitochondrial intracellular anterograde transport along the axons which probably increases the chance of the mitochondria undergoing mitophagy in the soma. Involved in mitochondrial biogenesis via the 'Lys-48'-linked polyubiquitination of transcriptional repressor ZNF746/PARIS which leads to its subsequent proteasomal degradation and allows activation of the transcription factor PPARGC1A. Limits the production of reactive oxygen species (ROS). Regulates cyclin-E during neuronal apoptosis. In collaboration with CHPF isoform 2, may enhance cell viability and protect cells from oxidative stress. Independently of its ubiquitin ligase activity, protects from apoptosis by the transcriptional repression of p53/TP53. May protect neurons against alpha synuclein toxicity, proteasomal dysfunction, GPR37 accumulation, and kainate-induced excitotoxicity. May play a role in controlling neurotransmitter trafficking at the presynaptic terminal and in calcium-dependent exocytosis. May represent a tumor suppressor gene. This Mus musculus (Mouse) protein is E3 ubiquitin-protein ligase parkin.